The sequence spans 310 residues: Olfactory receptor 4D1 (310 aa).

Over 1-25 (MEPQNTTQVSMFVLLGFSQTQELQK) the chain is Extracellular. A glycan (N-linked (GlcNAc...) asparagine) is linked at N5. The chain crosses the membrane as a helical span at residues 26-49 (FLFLLFLLVYVTTIVGNLLIMVTV). Residues 50–57 (TFDCRLHT) are Cytoplasmic-facing. A helical membrane pass occupies residues 58–79 (PMYFLLRNLALIDLCYSTVTSP). Residues 80–100 (KMLVDFLHETKTISYQGCMAQ) are Extracellular-facing. C97 and C189 form a disulfide bridge. The helical transmembrane segment at 101–120 (IFFFHLLGGGTVFFLSVMAY) threads the bilayer. The Cytoplasmic portion of the chain corresponds to 121-139 (DRYIAISQPLRYVTIMNTQ). A helical transmembrane segment spans residues 140 to 158 (LCVGLVVAAWVGGFVHSIV). The Extracellular segment spans residues 159-195 (QLALILPLPFCGPNILDNFYCDVPQVLRLACTDTSLL). The helical transmembrane segment at 196-219 (EFLMISNSGLLVIIWFLLLLISYT) threads the bilayer. Topologically, residues 220–235 (VILVMLRSHSGKARRK) are cytoplasmic. Residues 236 to 258 (AASTCTTHIIVVSMIFIPCIYIY) form a helical membrane-spanning segment. At 259–269 (TWPFTPFLMDK) the chain is on the extracellular side. A helical membrane pass occupies residues 270 to 289 (AVSISYTVMTPMLNPMIYTL). Over 290–310 (RNQDMKAAMRRLGKCLVICRE) the chain is Cytoplasmic.

This sequence belongs to the G-protein coupled receptor 1 family.

Its subcellular location is the cell membrane. In terms of biological role, odorant receptor. The chain is Olfactory receptor 4D1 (OR4D1) from Homo sapiens (Human).